The sequence spans 424 residues: Histidine--tRNA ligase (424 aa).

This sequence belongs to the class-II aminoacyl-tRNA synthetase family. In terms of assembly, homodimer.

The protein resides in the cytoplasm. The catalysed reaction is tRNA(His) + L-histidine + ATP = L-histidyl-tRNA(His) + AMP + diphosphate + H(+). The sequence is that of Histidine--tRNA ligase from Escherichia coli (strain SE11).